We begin with the raw amino-acid sequence, 626 residues long: (+)-3-carene synthase 1, chloroplastic (626 aa).

The N-terminal 45 residues, 1 to 45 (MSLISAVPLASSCVSKSLISSVREHTALRRAIATLQMSRRGKSVA), are a transit peptide targeting the chloroplast. Aspartate 377, aspartate 381, and aspartate 529 together coordinate Mg(2+). Residues 377-381 (DDMYD) carry the DDXXD motif motif.

The protein belongs to the terpene synthase family. Tpsd subfamily. Requires Mg(2+) as cofactor. It depends on Mn(2+) as a cofactor.

The protein resides in the plastid. It localises to the chloroplast. The enzyme catalyses (2E)-geranyl diphosphate = (+)-car-3-ene + diphosphate. It carries out the reaction (2E)-geranyl diphosphate = terpinolene + diphosphate. The protein operates within terpene metabolism; oleoresin biosynthesis. It participates in secondary metabolite biosynthesis; terpenoid biosynthesis. Monoterpene synthase (TPS) involved in the biosynthesis of monoterpene natural products included in conifer oleoresin secretions and volatile emissions; these compounds contribute to biotic and abiotic stress defense against herbivores and pathogens. Catalyzes the conversion of (2E)-geranyl diphosphate (GPP) to (+)-car-3-ene and, to a lower extent, to terpinolene. The protein is (+)-3-carene synthase 1, chloroplastic of Pinus contorta (Shore pine).